Here is a 77-residue protein sequence, read N- to C-terminus: MGLCFPCPGESAPPTPDLEEKRAKLAEAAERRQKEAASRGILDVQSVQEKRKKKEKIEKQIATSGPPPEGGLRWTVS.

2 disordered regions span residues 1 to 20 (MGLC…DLEE) and 25 to 77 (LAEA…WTVS). G2 is lipidated: N-myristoyl glycine. 2 S-palmitoyl cysteine lipidation sites follow: C4 and C7. Positions 21-33 (KRAKLAEAAERRQ) are VCP/p97-interacting motif (VIM). The span at 25-37 (LAEAAERRQKEAA) shows a compositional bias: basic and acidic residues. The residue at position 46 (S46) is a Phosphoserine.

Belongs to the SVIP family. Interacts (via VIM motif) with VCP/p97. Forms a complex with VCP/p97 and DERL1.

It is found in the membrane. Its subcellular location is the smooth endoplasmic reticulum membrane. The protein resides in the golgi apparatus membrane. It localises to the cell membrane. The protein localises to the lysosome membrane. In terms of biological role, negative regulator of the ER-associated degradation pathway (ERAD) of misfolded proteins. It competes with AMFR/gp78 for binding VCP/p97, and inhibits AMFR/gp78-VCP/p97 complex formation that is required for degradation of ERAD substrates. Involved in the regulation of adrenal cortisol and dehydroepiandrosterone (DHEA) biosynthesis. In Homo sapiens (Human), this protein is Small VCP/p97-interacting protein (SVIP).